Reading from the N-terminus, the 1374-residue chain is DNA-directed RNA polymerase subunit beta (1374 aa).

This sequence belongs to the RNA polymerase beta chain family. As to quaternary structure, the RNAP catalytic core consists of 2 alpha, 1 beta, 1 beta' and 1 omega subunit. When a sigma factor is associated with the core the holoenzyme is formed, which can initiate transcription.

It carries out the reaction RNA(n) + a ribonucleoside 5'-triphosphate = RNA(n+1) + diphosphate. Functionally, DNA-dependent RNA polymerase catalyzes the transcription of DNA into RNA using the four ribonucleoside triphosphates as substrates. In Methylobacterium radiotolerans (strain ATCC 27329 / DSM 1819 / JCM 2831 / NBRC 15690 / NCIMB 10815 / 0-1), this protein is DNA-directed RNA polymerase subunit beta.